The chain runs to 620 residues: 1-deoxy-D-xylulose-5-phosphate synthase (620 aa).

Residues His-80 and 121-123 contribute to the thiamine diphosphate site; that span reads GHS. Position 152 (Asp-152) interacts with Mg(2+). Thiamine diphosphate-binding positions include 153–154, Asn-181, Tyr-288, and Glu-370; that span reads GA. Asn-181 serves as a coordination point for Mg(2+).

This sequence belongs to the transketolase family. DXPS subfamily. Homodimer. Mg(2+) is required as a cofactor. Requires thiamine diphosphate as cofactor.

It carries out the reaction D-glyceraldehyde 3-phosphate + pyruvate + H(+) = 1-deoxy-D-xylulose 5-phosphate + CO2. Its pathway is metabolic intermediate biosynthesis; 1-deoxy-D-xylulose 5-phosphate biosynthesis; 1-deoxy-D-xylulose 5-phosphate from D-glyceraldehyde 3-phosphate and pyruvate: step 1/1. Its function is as follows. Catalyzes the acyloin condensation reaction between C atoms 2 and 3 of pyruvate and glyceraldehyde 3-phosphate to yield 1-deoxy-D-xylulose-5-phosphate (DXP). The chain is 1-deoxy-D-xylulose-5-phosphate synthase from Pseudoalteromonas translucida (strain TAC 125).